Reading from the N-terminus, the 256-residue chain is Thiazole synthase (256 aa).

The active-site Schiff-base intermediate with DXP is the Lys-95. Residues Gly-156, 182–183 (AG), and 204–205 (NT) contribute to the 1-deoxy-D-xylulose 5-phosphate site.

The protein belongs to the ThiG family. Homotetramer. Forms heterodimers with either ThiH or ThiS.

Its subcellular location is the cytoplasm. The enzyme catalyses [ThiS sulfur-carrier protein]-C-terminal-Gly-aminoethanethioate + 2-iminoacetate + 1-deoxy-D-xylulose 5-phosphate = [ThiS sulfur-carrier protein]-C-terminal Gly-Gly + 2-[(2R,5Z)-2-carboxy-4-methylthiazol-5(2H)-ylidene]ethyl phosphate + 2 H2O + H(+). It participates in cofactor biosynthesis; thiamine diphosphate biosynthesis. Catalyzes the rearrangement of 1-deoxy-D-xylulose 5-phosphate (DXP) to produce the thiazole phosphate moiety of thiamine. Sulfur is provided by the thiocarboxylate moiety of the carrier protein ThiS. In vitro, sulfur can be provided by H(2)S. This chain is Thiazole synthase, found in Escherichia coli O45:K1 (strain S88 / ExPEC).